A 126-amino-acid chain; its full sequence is SFAGKYELQSQENFEAFMKAIGLPDELIQKGKDIKSVSEIQQNGKSFKVTVTTGSKVLENEFTLGEEAELETLTGEKVKSIVKQEGDNKLVVNLKGITSVTELSGDTLINTLQKGDDTYKRISKRI.

The protein belongs to the calycin superfamily. Fatty-acid binding protein (FABP) family.

The protein localises to the cytoplasm. Binds free fatty acids and their coenzyme A derivatives, bilirubin, and some other small molecules in the cytoplasm. May be involved in intracellular lipid transport. The specificity of axolotl L-FABP differs from that of LB-FABP. The protein is Fatty acid-binding protein 1, liver of Ambystoma mexicanum (Axolotl).